A 614-amino-acid chain; its full sequence is Nuclear receptor subfamily 1 group D member 1 (614 aa).

Over residues 1 to 48 (MTTLDSNNNTGGVITYIGSSGSSPNRTSPESLYSDSSNGSFQSLTQGC) the composition is skewed to polar residues. Residues 1–70 (MTTLDSNNNT…TQDPARSFGS (70 aa)) are required for phosphorylation by CSNK1E and cytoplasmic localization. Positions 1–120 (MTTLDSNNNT…GNRVSPSKST (120 aa)) are disordered. Residues 1 to 129 (MTTLDSNNNT…TSNITKLNGM (129 aa)) are modulating. Residues 49-285 (PTYFPPSPTG…PPRSPSPEPT (237 aa)) form a crucial for activation of GJA1 region. Residues Ser-55 and Ser-59 each carry the phosphoserine; by GSK3-beta modification. Over residues 69 to 103 (GSIPPSLGDDGSPSSSSSSSSSSSSSFYNGSPPGG) the composition is skewed to low complexity. The nuclear receptor DNA-binding region spans 130–206 (VLLCKVCGDV…VGMSRDAVRF (77 aa)). 2 consecutive NR C4-type zinc fingers follow at residues 133-153 (CKVC…CEGC) and 170-194 (CLKN…FKKC). 2 positions are modified to N6-acetyllysine; by KAT5: Lys-192 and Lys-193. The interval 233 to 286 (SSQCPLETPPTQHPTPGPMGPSPPPAPAPSPLVGFSQFPQQLTPPRSPSPEPTV) is disordered. A compositionally biased stretch (pro residues) spans 239–262 (ETPPTQHPTPGPMGPSPPPAPAPS). Thr-275 carries the phosphothreonine; by CDK1 modification. One can recognise an NR LBD domain in the interval 285–614 (TVEDVISQVA…KLLSFRVDAQ (330 aa)). Cys-418 lines the heme pocket. N6-acetyllysine is present on Lys-591. Heme is bound at residue His-602.

This sequence belongs to the nuclear hormone receptor family. NR1 subfamily. As to quaternary structure, binds DNA as a monomer or a homodimer. Interacts with C1D, NR2E3, SP1 and ZNHIT1. Interacts with OPHN1 (via C-terminus). Interacts with PER2; the interaction associates PER2 to BMAL1 promoter region. Interacts with CRY1. Interacts with CCAR2. Interacts with SIAH2. Interacts with FBXW7 and CDK1. Interacts with HUWE1. Interacts with NR0B2. Interacts with NFIL3. Interacts (via domain NR LBD) with HSP90AA1 and HSP90AB1. In terms of processing, ubiquitinated, leading to its proteasomal degradation. Ubiquitinated by the SCF(FBXW7) complex when phosphorylated by CDK1 leading to its proteasomal degradation. Ubiquitinated by SIAH2; leading to its proteasomal degradation. Rapidly ubiquitinated in response to inflammatory triggers and sumoylation is a prerequisite to its ubiquitination. Sumoylated by UBE2I, desumoylated by SENP1, and sumoylation is a prerequisite to its ubiquitination. Post-translationally, phosphorylated by CSNK1E; phosphorylation enhances its cytoplasmic localization. In terms of processing, undergoes lysosome-mediated degradation in a time-dependent manner in the liver. As to expression, expressed in all tissues and cell lines examined. Expressed at high levels in some squamous carcinoma cell lines.

It is found in the nucleus. It localises to the cytoplasm. The protein localises to the cell projection. Its subcellular location is the dendrite. The protein resides in the dendritic spine. Transcriptional repressor which coordinates circadian rhythm and metabolic pathways in a heme-dependent manner. Integral component of the complex transcription machinery that governs circadian rhythmicity and forms a critical negative limb of the circadian clock by directly repressing the expression of core clock components BMAL1, CLOCK and CRY1. Also regulates genes involved in metabolic functions, including lipid and bile acid metabolism, adipogenesis, gluconeogenesis and the macrophage inflammatory response. Acts as a receptor for heme which stimulates its interaction with the NCOR1/HDAC3 corepressor complex, enhancing transcriptional repression. Recognizes two classes of DNA response elements within the promoter of its target genes and can bind to DNA as either monomers or homodimers, depending on the nature of the response element. Binds as a monomer to a response element composed of the consensus half-site motif 5'-[A/G]GGTCA-3' preceded by an A/T-rich 5' sequence (RevRE), or as a homodimer to a direct repeat of the core motif spaced by two nucleotides (RevDR-2). Acts as a potent competitive repressor of ROR alpha (RORA) function and regulates the levels of its ligand heme by repressing the expression of PPARGC1A, a potent inducer of heme synthesis. Regulates lipid metabolism by repressing the expression of APOC3 and by influencing the activity of sterol response element binding proteins (SREBPs); represses INSIG2 which interferes with the proteolytic activation of SREBPs which in turn govern the rhythmic expression of enzymes with key functions in sterol and fatty acid synthesis. Regulates gluconeogenesis via repression of G6PC1 and PEPCK and adipocyte differentiation via repression of PPARG. Regulates glucagon release in pancreatic alpha-cells via the AMPK-NAMPT-SIRT1 pathway and the proliferation, glucose-induced insulin secretion and expression of key lipogenic genes in pancreatic-beta cells. Positively regulates bile acid synthesis by increasing hepatic expression of CYP7A1 via repression of NR0B2 and NFIL3 which are negative regulators of CYP7A1. Modulates skeletal muscle oxidative capacity by regulating mitochondrial biogenesis and autophagy; controls mitochondrial biogenesis and respiration by interfering with the STK11-PRKAA1/2-SIRT1-PPARGC1A signaling pathway. Represses the expression of SERPINE1/PAI1, an important modulator of cardiovascular disease and the expression of inflammatory cytokines and chemokines in macrophages. Represses gene expression at a distance in macrophages by inhibiting the transcription of enhancer-derived RNAs (eRNAs). Plays a role in the circadian regulation of body temperature and negatively regulates thermogenic transcriptional programs in brown adipose tissue (BAT); imposes a circadian oscillation in BAT activity, increasing body temperature when awake and depressing thermogenesis during sleep. In concert with NR2E3, regulates transcriptional networks critical for photoreceptor development and function. In addition to its activity as a repressor, can also act as a transcriptional activator. In the ovarian granulosa cells acts as a transcriptional activator of STAR which plays a role in steroid biosynthesis. In collaboration with SP1, activates GJA1 transcription in a heme-independent manner. Represses the transcription of CYP2B10, CYP4A10 and CYP4A14. Represses the transcription of CES2. Represses and regulates the circadian expression of TSHB in a NCOR1-dependent manner. Negatively regulates the protein stability of NR3C1 and influences the time-dependent subcellular distribution of NR3C1, thereby affecting its transcriptional regulatory activity. Plays a critical role in the circadian control of neutrophilic inflammation in the lung; under resting, non-stress conditions, acts as a rhythmic repressor to limit inflammatory activity whereas in the presence of inflammatory triggers undergoes ubiquitin-mediated degradation thereby relieving inhibition of the inflammatory response. Plays a key role in the circadian regulation of microglial activation and neuroinflammation; suppresses microglial activation through the NF-kappaB pathway in the central nervous system. Plays a role in the regulation of the diurnal rhythms of lipid and protein metabolism in the skeletal muscle via transcriptional repression of genes controlling lipid and amino acid metabolism in the muscle. This chain is Nuclear receptor subfamily 1 group D member 1 (NR1D1), found in Ovis aries (Sheep).